The following is a 264-amino-acid chain: Large ribosomal subunit protein mL50 (264 aa).

Residues 1-75 constitute a mitochondrion transit peptide; that stretch reads MSSLLKLHCI…EEGTNEASSQ (75 aa).

Belongs to the mitochondrion-specific ribosomal protein mL50 family. In terms of assembly, component of the mitochondrial large ribosomal subunit (mt-LSU). Mature yeast 74S mitochondrial ribosomes consist of a small (37S) and a large (54S) subunit. The 37S small subunit contains a 15S ribosomal RNA (15S mt-rRNA) and 34 different proteins. The 54S large subunit contains a 21S rRNA (21S mt-rRNA) and 46 different proteins.

Its subcellular location is the mitochondrion. Its function is as follows. Component of the mitochondrial ribosome (mitoribosome), a dedicated translation machinery responsible for the synthesis of mitochondrial genome-encoded proteins, including at least some of the essential transmembrane subunits of the mitochondrial respiratory chain. The mitoribosomes are attached to the mitochondrial inner membrane and translation products are cotranslationally integrated into the membrane. This Saccharomyces cerevisiae (strain ATCC 204508 / S288c) (Baker's yeast) protein is Large ribosomal subunit protein mL50 (MRPL13).